Reading from the N-terminus, the 272-residue chain is Hydroxyethylthiazole kinase (272 aa).

A substrate-binding site is contributed by M62. 2 residues coordinate ATP: R138 and T183. G210 provides a ligand contact to substrate.

This sequence belongs to the Thz kinase family. It depends on Mg(2+) as a cofactor.

The enzyme catalyses 5-(2-hydroxyethyl)-4-methylthiazole + ATP = 4-methyl-5-(2-phosphooxyethyl)-thiazole + ADP + H(+). It functions in the pathway cofactor biosynthesis; thiamine diphosphate biosynthesis; 4-methyl-5-(2-phosphoethyl)-thiazole from 5-(2-hydroxyethyl)-4-methylthiazole: step 1/1. Functionally, catalyzes the phosphorylation of the hydroxyl group of 4-methyl-5-beta-hydroxyethylthiazole (THZ). In Dichelobacter nodosus (strain VCS1703A), this protein is Hydroxyethylthiazole kinase.